The primary structure comprises 348 residues: Alternative squalene epoxidase (348 aa).

Residues 1–10 (MLVDRVENNE) are compositionally biased toward basic and acidic residues. The interval 1–26 (MLVDRVENNEKQQQQMASSSDAMSDS) is disordered. Residues 12–26 (QQQQMASSSDAMSDS) show a composition bias toward low complexity. The next 3 helical transmembrane spans lie at 55–75 (AIAW…LLLS), 105–125 (LGLV…WIFF), and 153–173 (GLLT…YLAI). The Fatty acid hydroxylase domain maps to 197-332 (FMCLVLQDGI…FMWFDQLGGT (136 aa)). Positions 211-215 (HVLEH) match the Histidine box-1 motif. The short motif at 226-230 (HKPHH) is the Histidine box-2 element. 2 helical membrane passes run 243–263 (GSLM…ANLV) and 277–297 (SYAC…DGIF). A Histidine box-3 motif is present at residues 308 to 312 (HHVHH).

The protein belongs to the sterol desaturase family. As to quaternary structure, interacts with cytochrome b5/PHATRDRAFT_30770. Requires Fe cation as cofactor.

It is found in the endoplasmic reticulum membrane. It carries out the reaction squalene + 2 Fe(II)-[cytochrome b5] + O2 + 2 H(+) = (S)-2,3-epoxysqualene + 2 Fe(III)-[cytochrome b5] + H2O. It functions in the pathway terpene metabolism; lanosterol biosynthesis; lanosterol from farnesyl diphosphate. The activity of this enzyme is not inhibited by terbinafine, an established inhibitor of the conventional flavoprotein squalene epoxidase. Catalyzes the stereospecific epoxidation of squalene at the terminal double bond to form (S)-2,3-epoxysqualene, the first oxygenation step in sterol biosynthesis. The sequence is that of Alternative squalene epoxidase from Phaeodactylum tricornutum (strain CCAP 1055/1).